We begin with the raw amino-acid sequence, 1215 residues long: Inner capsid protein VP3 (1215 aa).

The tract at residues 1–81 (MPRRPRRNAK…RVDNDGDVIT (81 aa)) is disordered. Residues 21–44 (LVAPAANASVSSTVNTTTSPTLAA) are compositionally biased toward low complexity. The C2H2-type zinc-finger motif lies at 118–141 (YRCNVCNAEFPSMSAMTEHLRTSH).

It belongs to the turreted BTV-fold inner capsid family. As to quaternary structure, homodecamer; each decamer is made up of two conformers of VP2, called VP2A and VP2B. 12 homodecamers assemble to form an icosahedral capsid. Interacts with VP6.

The protein resides in the virion. In terms of biological role, inner capsid protein that self-assembles to form an icosahedral capsid with a T=2 symmetry, which consists of 120 copies of VP2, with channels at each of its five-fold vertices. This capsid constitutes the innermost concentric layer of the viral mature particle. This chain is Inner capsid protein VP3 (S3), found in Ctenopharyngodon idella (Grass carp).